Consider the following 243-residue polypeptide: Venom nerve growth factor (243 aa).

The N-terminal stretch at 1-18 is a signal peptide; the sequence is MSMLCYTLIIAFLIGIWA. Positions 19–125 are excised as a propeptide; that stretch reads APKSEDNVPL…TLNRNIRTKR (107 aa). The interval 45–66 is disordered; the sequence is HEGLKTSRNTDQRHLAPKKAED. Positions 46-66 are enriched in basic and acidic residues; it reads EGLKTSRNTDQRHLAPKKAED. Cystine bridges form between Cys139-Cys204, Cys182-Cys232, and Cys192-Cys234. N-linked (GlcNAc...) asparagine glycosylation occurs at Asn148.

The protein belongs to the NGF-beta family. As to quaternary structure, homodimer; non-covalently linked. In terms of tissue distribution, expressed by the venom gland.

The protein localises to the secreted. Functionally, nerve growth factor is important for the development and maintenance of the sympathetic and sensory nervous systems. It stimulates division and differentiation of sympathetic and embryonic sensory neurons as well as basal forebrain cholinergic neurons in the brain. Its relevance in the snake venom is not clear. However, it has been shown to inhibit metalloproteinase-dependent proteolysis of platelet glycoprotein Ib alpha, suggesting a metalloproteinase inhibition to prevent metalloprotease autodigestion and/or protection against prey proteases. Binds a lipid between the two protein chains in the homodimer. The lipid-bound form promotes histamine relase from mouse mast cells, contrary to the lipid-free form. The protein is Venom nerve growth factor of Cryptophis nigrescens (Eastern small-eyed snake).